A 347-amino-acid polypeptide reads, in one-letter code: DNA-directed RNA polymerase subunit alpha (347 aa).

Residues 1 to 243 are alpha N-terminal domain (alpha-NTD); that stretch reads MLFREGTRLI…DQISVFINFD (243 aa). Positions 255–347 are alpha C-terminal domain (alpha-CTD); sequence SGSSDLNDNL…EWKRKQHHEA (93 aa).

The protein belongs to the RNA polymerase alpha chain family. Homodimer. The RNAP catalytic core consists of 2 alpha, 1 beta, 1 beta' and 1 omega subunit. When a sigma factor is associated with the core the holoenzyme is formed, which can initiate transcription.

The enzyme catalyses RNA(n) + a ribonucleoside 5'-triphosphate = RNA(n+1) + diphosphate. Its function is as follows. DNA-dependent RNA polymerase catalyzes the transcription of DNA into RNA using the four ribonucleoside triphosphates as substrates. This is DNA-directed RNA polymerase subunit alpha from Lawsonia intracellularis (strain PHE/MN1-00).